Here is a 130-residue protein sequence, read N- to C-terminus: MINNVVLIGRLTKDVELRYTPSQVACAQFTLAVNRNFKNQDGQKEADFINCVIWRKSAENLSNWAKKGQLIAITGRIQTRNYENQQGQRVYVTEVVAESFQILEKRDNTANTSSLADSMPDYGPEPDLPF.

Residues 1–104 (MINNVVLIGR…VVAESFQILE (104 aa)) enclose the SSB domain. The tract at residues 108–130 (NTANTSSLADSMPDYGPEPDLPF) is disordered.

Homotetramer.

The chain is Single-stranded DNA-binding protein 1 (ssb1) from Streptococcus pyogenes serotype M18 (strain MGAS8232).